A 303-amino-acid chain; its full sequence is Mycothiol acetyltransferase (303 aa).

N-acetyltransferase domains lie at V3–P152 and V155–S303. Residue D35 participates in 1D-myo-inositol 2-(L-cysteinylamino)-2-deoxy-alpha-D-glucopyranoside binding. L79 to V81 lines the acetyl-CoA pocket. Residues E182, K224, and E237 each contribute to the 1D-myo-inositol 2-(L-cysteinylamino)-2-deoxy-alpha-D-glucopyranoside site. Residues V241–V243 and Q248–R254 each bind acetyl-CoA. Y275 is a binding site for 1D-myo-inositol 2-(L-cysteinylamino)-2-deoxy-alpha-D-glucopyranoside.

This sequence belongs to the acetyltransferase family. MshD subfamily. As to quaternary structure, monomer.

It carries out the reaction 1D-myo-inositol 2-(L-cysteinylamino)-2-deoxy-alpha-D-glucopyranoside + acetyl-CoA = mycothiol + CoA + H(+). Its function is as follows. Catalyzes the transfer of acetyl from acetyl-CoA to desacetylmycothiol (Cys-GlcN-Ins) to form mycothiol. This is Mycothiol acetyltransferase from Kocuria rhizophila (strain ATCC 9341 / DSM 348 / NBRC 103217 / DC2201).